Reading from the N-terminus, the 379-residue chain is Alcohol dehydrogenase class-2 isozyme 1 (379 aa).

Zn(2+) contacts are provided by C47, H69, C99, C102, C105, C113, and C176. NAD(+) contacts are provided by residues 205 to 210, D229, K234, 298 to 300, and R374; these read GLGGVG and VGV.

It belongs to the zinc-containing alcohol dehydrogenase family. Class-II subfamily. In terms of assembly, homodimer. Zn(2+) serves as cofactor.

The protein localises to the cytoplasm. It carries out the reaction a primary alcohol + NAD(+) = an aldehyde + NADH + H(+). The catalysed reaction is a secondary alcohol + NAD(+) = a ketone + NADH + H(+). This chain is Alcohol dehydrogenase class-2 isozyme 1 (ADH2-1), found in Oryctolagus cuniculus (Rabbit).